A 155-amino-acid chain; its full sequence is Cell division protein SepF (155 aa).

Over residues 22–46 (RYVEEPEQRDERPALEKGRAPKEKQ) the composition is skewed to basic and acidic residues. A disordered region spans residues 22–54 (RYVEEPEQRDERPALEKGRAPKEKQTAGMEQNQ).

Belongs to the SepF family. Homodimer. Interacts with FtsZ.

It is found in the cytoplasm. Functionally, cell division protein that is part of the divisome complex and is recruited early to the Z-ring. Probably stimulates Z-ring formation, perhaps through the cross-linking of FtsZ protofilaments. Its function overlaps with FtsA. The polypeptide is Cell division protein SepF (Shouchella clausii (strain KSM-K16) (Alkalihalobacillus clausii)).